The sequence spans 165 residues: Protein FAM219A (165 aa).

Met1 carries the N-acetylmethionine modification. The tract at residues 1 to 114 (MMEEIDRFQV…SRYSSSGYSS (114 aa)) is disordered. Basic and acidic residues predominate over residues 32-44 (CDAREEKQRELAR). Residues 49-63 (KNGSMGSPVNQQPKK) are compositionally biased toward polar residues. 2 positions are modified to phosphoserine: Ser55 and Ser85. Thr96 bears the Phosphothreonine mark. 2 positions are modified to phosphoserine: Ser98 and Ser105. The segment covering 105-114 (SRYSSSGYSS) has biased composition (low complexity).

The protein belongs to the FAM219 family.

This Macaca fascicularis (Crab-eating macaque) protein is Protein FAM219A (FAM219A).